The primary structure comprises 305 residues: Acetyl-coenzyme A carboxylase carboxyl transferase subunit alpha (305 aa).

The CoA carboxyltransferase C-terminal domain maps to 33–280 (AKLESSTALS…KEQILKDLAD (248 aa)).

Belongs to the AccA family. In terms of assembly, acetyl-CoA carboxylase is a heterohexamer composed of biotin carboxyl carrier protein (AccB), biotin carboxylase (AccC) and two subunits each of ACCase subunit alpha (AccA) and ACCase subunit beta (AccD).

The protein resides in the cytoplasm. The enzyme catalyses N(6)-carboxybiotinyl-L-lysyl-[protein] + acetyl-CoA = N(6)-biotinyl-L-lysyl-[protein] + malonyl-CoA. The protein operates within lipid metabolism; malonyl-CoA biosynthesis; malonyl-CoA from acetyl-CoA: step 1/1. In terms of biological role, component of the acetyl coenzyme A carboxylase (ACC) complex. First, biotin carboxylase catalyzes the carboxylation of biotin on its carrier protein (BCCP) and then the CO(2) group is transferred by the carboxyltransferase to acetyl-CoA to form malonyl-CoA. This chain is Acetyl-coenzyme A carboxylase carboxyl transferase subunit alpha, found in Treponema denticola (strain ATCC 35405 / DSM 14222 / CIP 103919 / JCM 8153 / KCTC 15104).